A 417-amino-acid polypeptide reads, in one-letter code: Aminoacyltransferase FemB (417 aa).

The protein belongs to the FemABX family.

The protein localises to the cytoplasm. It catalyses the reaction MurNAc-L-Ala-D-isoglutaminyl-L-Lys-(N(6)-tri-Gly)-D-Ala-D-Ala-diphospho-di-trans,octa-cis-undecaprenyl-GlcNAc + 2 glycyl-tRNA(Gly) = MurNAc-L-Ala-D-isoglutaminyl-L-Lys-(N(6)-penta-Gly)-D-Ala-D-Ala-diphospho-di-trans,octa-cis-undecaprenyl-GlcNAc + 2 tRNA(Gly) + 2 H(+). Functionally, catalyzes the incorporation of amino acid(s) into the interchain peptide bridge of peptidoglycan, using aminoacyl-tRNA as amino acid donor. The protein is Aminoacyltransferase FemB (femB) of Staphylococcus epidermidis (strain ATCC 12228 / FDA PCI 1200).